The primary structure comprises 307 residues: Oxygen-dependent coproporphyrinogen-III oxidase (307 aa).

Ser-99 serves as a coordination point for substrate. Positions 103 and 113 each coordinate a divalent metal cation. The Proton donor role is filled by His-113. A substrate-binding site is contributed by 115–117 (NVR). Positions 152 and 182 each coordinate a divalent metal cation. The important for dimerization stretch occupies residues 247 to 282 (YVEFNLVFDRGTLFGLQSGGRTESILMSMPPVVNWR). 265–267 (GGR) is a binding site for substrate.

Belongs to the aerobic coproporphyrinogen-III oxidase family. As to quaternary structure, homodimer. The cofactor is a divalent metal cation.

Its subcellular location is the cytoplasm. The catalysed reaction is coproporphyrinogen III + O2 + 2 H(+) = protoporphyrinogen IX + 2 CO2 + 2 H2O. Its pathway is porphyrin-containing compound metabolism; protoporphyrin-IX biosynthesis; protoporphyrinogen-IX from coproporphyrinogen-III (O2 route): step 1/1. Involved in the heme biosynthesis. Catalyzes the aerobic oxidative decarboxylation of propionate groups of rings A and B of coproporphyrinogen-III to yield the vinyl groups in protoporphyrinogen-IX. This Paraburkholderia xenovorans (strain LB400) protein is Oxygen-dependent coproporphyrinogen-III oxidase.